Consider the following 1095-residue polypeptide: Solute carrier family 12 member 1 (1095 aa).

At 1–173 (MSVSIPSNSV…EEDMTGVVKF (173 aa)) the chain is on the cytoplasmic side. Residues 16–19 (RFQV) carry the RFXV motif motif. Residues 29 to 49 (AAAVGDSADPPHYEETSFGDE) are disordered. Phosphoserine is present on residues Ser-57 and Ser-87. Residues Thr-91, Thr-96, Thr-101, and Thr-114 each carry the phosphothreonine modification. Phosphoserine is present on Ser-116. Phosphoserine; by AMPK is present on Ser-126. The residue at position 144 (Ser-144) is a Phosphoserine. The helical transmembrane segment at 174 to 194 (GWVKGVLVRCMLNIWGVMLFI) threads the bilayer. Over 195 to 197 (RLS) the chain is Extracellular. The chain crosses the membrane as a helical span at residues 198 to 218 (WIVGEAGIGLGVLIILLSTMV). Residues 219–255 (TSITGLSTSAIATNGFVRGGGAYYLISRSLGPEFGGS) lie on the Cytoplasmic side of the membrane. Residues 256 to 276 (IGLIFAFANAVAVAMYVVGFA) form a helical membrane-spanning segment. The Extracellular portion of the chain corresponds to 277-298 (ETVVDLLKESDSMMVDPTNDIR). The helical transmembrane segment at 299–319 (IIGSITVVILLGISVAGMEWE) threads the bilayer. The Cytoplasmic segment spans residues 320-323 (AKAQ). A helical membrane pass occupies residues 324-344 (VILLVILLIAIANFFIGTVIP). Topologically, residues 345–375 (SNNEKKSRGFFNYQASIFAENFGPSFTKGEG) are extracellular. A helical transmembrane segment spans residues 376-396 (FFSVFAIFFPAATGILAGANI). At 397 to 413 (SGDLEDPQDAIPRGTML) the chain is on the cytoplasmic side. Residues 414 to 434 (AIFITTVAYIGVAICVAACVV) traverse the membrane as a helical segment. Residues 435–546 (RDATGSMNDT…NNEPLRGYFL (112 aa)) are Extracellular-facing. 2 N-linked (GlcNAc...) asparagine glycosylation sites follow: Asn-442 and Asn-452. The next 2 helical transmembrane spans lie at 547–567 (TFVIAMAFILIAELNVIAPII) and 568–588 (SNFFLASYALINFSCFHASYA). Residues 589–605 (KSPGWRPAYGIYNMWVS) lie on the Extracellular side of the membrane. Residues 606–626 (LFGAILCCAVMFVINWWAAVI) form a helical membrane-spanning segment. Topologically, residues 627 to 1095 (TYVIELFLYI…NHKNVLTFYS (469 aa)) are cytoplasmic.

Belongs to the SLC12A transporter family. As to quaternary structure, when phosphorylated, interacts with PPP3CB. Post-translationally, phosphorylated at Ser-87, Thr-96 and Thr-101 by OXSR1/OSR1 and STK39/SPAK downstream of WNK kinases (WNK1, WNK2, WNK3 or WNK4), promoting its activity. Short-term cyclosporine administration increases SLC12A1 phosphorylation in kidney thick ascending limb, possibly through the inhibition of PPP3CB/calcineurin A beta phosphatase. Predominantly expressed in kidney (at protein level). As to expression, kidney-specific; most highly expressed in the outer stripe of outer medulla (at protein level). In terms of tissue distribution, kidney-specific; most highly expressed in the cortical thick ascending limb (at protein level). Kidney-specific; most highly expressed in the inner stripe of outer medulla (at protein level).

The protein resides in the apical cell membrane. The catalysed reaction is K(+)(out) + 2 chloride(out) + Na(+)(out) = K(+)(in) + 2 chloride(in) + Na(+)(in). Activated following phosphorylation by OXSR1/OSR1 and STK39/SPAK downstream of WNK kinases (WNK1, WNK2, WNK3 or WNK4). Its activity is regulated as follows. Inhibited by mercury dichloride and diuretic drug bumetaide. Inactive in isotonic conditions. Renal sodium, potassium and chloride ion cotransporter that mediates the transepithelial NaCl reabsorption in the thick ascending limb and plays an essential role in the urinary concentration and volume regulation. Electrically silent transporter system. In terms of biological role, high affinity, high capacity cotransporter for sodium, potassium and chloride ions, with a coupling ratio 1Na(+):1K(+):2Cl(-). Its function is as follows. High affinity, low capacity cotransporter for sodium, potassium and chloride ions, with a coupling ratio 1Na(+):1K(+):2Cl(-). Functionally, low affinity, low capacity cotransporter for sodium, potassium and chloride ions, with a coupling ratio 1Na(+):1K(+):2Cl(-). The sequence is that of Solute carrier family 12 member 1 (Slc12a1) from Mus musculus (Mouse).